Consider the following 391-residue polypeptide: 3-ketoacyl-CoA thiolase (391 aa).

Cys-95 functions as the Acyl-thioester intermediate in the catalytic mechanism. Residues His-347 and Cys-377 each act as proton acceptor in the active site.

It belongs to the thiolase-like superfamily. Thiolase family. As to quaternary structure, heterotetramer of two alpha chains (FadB) and two beta chains (FadA).

Its subcellular location is the cytoplasm. The catalysed reaction is an acyl-CoA + acetyl-CoA = a 3-oxoacyl-CoA + CoA. Its pathway is lipid metabolism; fatty acid beta-oxidation. Its function is as follows. Catalyzes the final step of fatty acid oxidation in which acetyl-CoA is released and the CoA ester of a fatty acid two carbons shorter is formed. The sequence is that of 3-ketoacyl-CoA thiolase from Marinomonas sp. (strain MWYL1).